A 189-amino-acid chain; its full sequence is Peptidyl-tRNA hydrolase (189 aa).

Residue Tyr-16 participates in tRNA binding. The active-site Proton acceptor is His-21. Residues Phe-67, Asn-69, and Asn-115 each coordinate tRNA.

This sequence belongs to the PTH family. In terms of assembly, monomer.

Its subcellular location is the cytoplasm. It carries out the reaction an N-acyl-L-alpha-aminoacyl-tRNA + H2O = an N-acyl-L-amino acid + a tRNA + H(+). Its function is as follows. Hydrolyzes ribosome-free peptidyl-tRNAs (with 1 or more amino acids incorporated), which drop off the ribosome during protein synthesis, or as a result of ribosome stalling. Functionally, catalyzes the release of premature peptidyl moieties from peptidyl-tRNA molecules trapped in stalled 50S ribosomal subunits, and thus maintains levels of free tRNAs and 50S ribosomes. In Legionella pneumophila (strain Paris), this protein is Peptidyl-tRNA hydrolase.